Consider the following 404-residue polypeptide: 1-deoxy-D-xylulose 5-phosphate reductoisomerase (404 aa).

8 residues coordinate NADPH: threonine 5, glycine 6, serine 7, isoleucine 8, glycine 31, arginine 32, asparagine 33, and asparagine 121. Position 122 (lysine 122) interacts with 1-deoxy-D-xylulose 5-phosphate. Glutamate 123 is a binding site for NADPH. Position 147 (aspartate 147) interacts with Mn(2+). Residues serine 148, glutamate 149, serine 185, and histidine 208 each contribute to the 1-deoxy-D-xylulose 5-phosphate site. Residue glutamate 149 coordinates Mn(2+). An NADPH-binding site is contributed by glycine 214. 1-deoxy-D-xylulose 5-phosphate-binding residues include serine 221, asparagine 226, lysine 227, and glutamate 230. Position 230 (glutamate 230) interacts with Mn(2+).

This sequence belongs to the DXR family. Requires Mg(2+) as cofactor. Mn(2+) serves as cofactor.

The enzyme catalyses 2-C-methyl-D-erythritol 4-phosphate + NADP(+) = 1-deoxy-D-xylulose 5-phosphate + NADPH + H(+). Its pathway is isoprenoid biosynthesis; isopentenyl diphosphate biosynthesis via DXP pathway; isopentenyl diphosphate from 1-deoxy-D-xylulose 5-phosphate: step 1/6. In terms of biological role, catalyzes the NADPH-dependent rearrangement and reduction of 1-deoxy-D-xylulose-5-phosphate (DXP) to 2-C-methyl-D-erythritol 4-phosphate (MEP). This chain is 1-deoxy-D-xylulose 5-phosphate reductoisomerase, found in Prochlorococcus marinus subsp. pastoris (strain CCMP1986 / NIES-2087 / MED4).